The primary structure comprises 164 residues: Phosphopantetheine adenylyltransferase (164 aa).

Ser-9 provides a ligand contact to substrate. ATP is bound by residues 9–10 (SF) and His-17. Substrate-binding residues include Lys-41, Val-78, and Arg-92. Residues 93–95 (GLR), Glu-103, and 128–134 (SRPITAT) each bind ATP.

It belongs to the bacterial CoaD family. As to quaternary structure, homohexamer. It depends on Mg(2+) as a cofactor.

It localises to the cytoplasm. It catalyses the reaction (R)-4'-phosphopantetheine + ATP + H(+) = 3'-dephospho-CoA + diphosphate. It functions in the pathway cofactor biosynthesis; coenzyme A biosynthesis; CoA from (R)-pantothenate: step 4/5. Functionally, reversibly transfers an adenylyl group from ATP to 4'-phosphopantetheine, yielding dephospho-CoA (dPCoA) and pyrophosphate. The protein is Phosphopantetheine adenylyltransferase of Rhizobium etli (strain ATCC 51251 / DSM 11541 / JCM 21823 / NBRC 15573 / CFN 42).